A 289-amino-acid chain; its full sequence is Probable endonuclease 4 (289 aa).

Positions 75, 115, 153, 187, 190, 224, 237, 239, and 269 each coordinate Zn(2+).

It belongs to the AP endonuclease 2 family. The cofactor is Zn(2+).

The enzyme catalyses Endonucleolytic cleavage to 5'-phosphooligonucleotide end-products.. Functionally, endonuclease IV plays a role in DNA repair. It cleaves phosphodiester bonds at apurinic or apyrimidinic (AP) sites, generating a 3'-hydroxyl group and a 5'-terminal sugar phosphate. This Chlamydia caviae (strain ATCC VR-813 / DSM 19441 / 03DC25 / GPIC) (Chlamydophila caviae) protein is Probable endonuclease 4.